The chain runs to 578 residues: Phenylalanine--tRNA ligase beta subunit (578 aa).

A B5 domain is found at 292 to 370 (FDTDEKSVSH…RAYGFDNLEP (79 aa)). 4 residues coordinate Mg(2+): Asp348, Asp354, Asp357, and Asp358.

This sequence belongs to the phenylalanyl-tRNA synthetase beta subunit family. Type 2 subfamily. As to quaternary structure, tetramer of two alpha and two beta subunits. Mg(2+) is required as a cofactor.

The protein resides in the cytoplasm. It carries out the reaction tRNA(Phe) + L-phenylalanine + ATP = L-phenylalanyl-tRNA(Phe) + AMP + diphosphate + H(+). The polypeptide is Phenylalanine--tRNA ligase beta subunit (Halorubrum lacusprofundi (strain ATCC 49239 / DSM 5036 / JCM 8891 / ACAM 34)).